The primary structure comprises 23 residues: Coenzyme PQQ synthesis protein A (23 aa).

The pyrroloquinoline quinone (Glu-Tyr) cross-link spans 15-19 (EVTLY).

This sequence belongs to the PqqA family.

It participates in cofactor biosynthesis; pyrroloquinoline quinone biosynthesis. Required for coenzyme pyrroloquinoline quinone (PQQ) biosynthesis. PQQ is probably formed by cross-linking a specific glutamate to a specific tyrosine residue and excising these residues from the peptide. The sequence is that of Coenzyme PQQ synthesis protein A from Klebsiella pneumoniae (strain 342).